A 195-amino-acid chain; its full sequence is Pyridoxal 5'-phosphate synthase subunit PdxT (195 aa).

Position 46–48 (Gly46–Ser48) interacts with L-glutamine. Catalysis depends on Cys78, which acts as the Nucleophile. L-glutamine contacts are provided by residues Arg107 and Ile135–Arg136. Residues His172 and Glu174 each act as charge relay system in the active site.

This sequence belongs to the glutaminase PdxT/SNO family. In terms of assembly, in the presence of PdxS, forms a dodecamer of heterodimers. Only shows activity in the heterodimer.

It catalyses the reaction aldehydo-D-ribose 5-phosphate + D-glyceraldehyde 3-phosphate + L-glutamine = pyridoxal 5'-phosphate + L-glutamate + phosphate + 3 H2O + H(+). The enzyme catalyses L-glutamine + H2O = L-glutamate + NH4(+). Its pathway is cofactor biosynthesis; pyridoxal 5'-phosphate biosynthesis. In terms of biological role, catalyzes the hydrolysis of glutamine to glutamate and ammonia as part of the biosynthesis of pyridoxal 5'-phosphate. The resulting ammonia molecule is channeled to the active site of PdxS. This chain is Pyridoxal 5'-phosphate synthase subunit PdxT, found in Corynebacterium jeikeium (strain K411).